The primary structure comprises 103 residues: Large ribosomal subunit protein bL21 (103 aa).

It belongs to the bacterial ribosomal protein bL21 family. In terms of assembly, part of the 50S ribosomal subunit. Contacts protein L20.

In terms of biological role, this protein binds to 23S rRNA in the presence of protein L20. The protein is Large ribosomal subunit protein bL21 of Thiobacillus denitrificans (strain ATCC 25259 / T1).